Here is an 842-residue protein sequence, read N- to C-terminus: Alanine--tRNA ligase (842 aa).

Residues histidine 549, histidine 553, cysteine 650, and histidine 654 each coordinate Zn(2+).

This sequence belongs to the class-II aminoacyl-tRNA synthetase family. The cofactor is Zn(2+).

It localises to the cytoplasm. It carries out the reaction tRNA(Ala) + L-alanine + ATP = L-alanyl-tRNA(Ala) + AMP + diphosphate. Its function is as follows. Catalyzes the attachment of alanine to tRNA(Ala) in a two-step reaction: alanine is first activated by ATP to form Ala-AMP and then transferred to the acceptor end of tRNA(Ala). Also edits incorrectly charged Ser-tRNA(Ala) and Gly-tRNA(Ala) via its editing domain. This chain is Alanine--tRNA ligase, found in Campylobacter jejuni (strain RM1221).